A 317-amino-acid chain; its full sequence is MGQPNVPLVAVVGPTASGKSDVGVALAHLLEREHGRPGEVVNADAMQLYRGMDVGTAKLTPAEREGVPHHLLDVLDVTETAEVARFQADARAAVEDVTARGGLPLLVGGSGLYVRAAVDDLRFPGTDPEVRARWEAELAVLGPHALHARLAERDPAAAAKILPGNGRRIVRALEVGELTGRPFAASLPEQTYLRPTVQVGLAVPREQLDARIDARVERMWAAGLVAEVRDLEARGLREGRTASRALGYAQVLDAFDGTTTEDEARELTARLTRRFARKQESWFRRDPRVHWLPAPDGSDPLDLARRVLELLPVASAA.

13–20 (GPTASGKS) provides a ligand contact to ATP. 15–20 (TASGKS) provides a ligand contact to substrate.

The protein belongs to the IPP transferase family. Monomer. The cofactor is Mg(2+).

The enzyme catalyses adenosine(37) in tRNA + dimethylallyl diphosphate = N(6)-dimethylallyladenosine(37) in tRNA + diphosphate. Catalyzes the transfer of a dimethylallyl group onto the adenine at position 37 in tRNAs that read codons beginning with uridine, leading to the formation of N6-(dimethylallyl)adenosine (i(6)A). The chain is tRNA dimethylallyltransferase from Kineococcus radiotolerans (strain ATCC BAA-149 / DSM 14245 / SRS30216).